The chain runs to 424 residues: Zinc finger and BTB domain-containing protein 6 (424 aa).

One can recognise a BTB domain in the interval 33–97 (CDVSIYINDT…CYTGALEVKR (65 aa)). Serine 202 carries the phosphoserine modification. 4 C2H2-type zinc fingers span residues 301–323 (HQCP…LKMH), 326–348 (FLCL…IRGH), 354–376 (FQCT…LNIH), and 382–405 (YKCH…TSVH). Residues 402 to 424 (TSVHGRSSGEKLSRPDLKRQSLL) are disordered. A compositionally biased stretch (basic and acidic residues) spans 408–424 (SSGEKLSRPDLKRQSLL).

Widely expressed with highest levels in brain.

Its subcellular location is the nucleus. May be involved in transcriptional regulation. This Homo sapiens (Human) protein is Zinc finger and BTB domain-containing protein 6 (ZBTB6).